The primary structure comprises 67 residues: DNA-directed RNA polymerase subunit omega (67 aa).

This sequence belongs to the RNA polymerase subunit omega family. As to quaternary structure, the RNAP catalytic core consists of 2 alpha, 1 beta, 1 beta' and 1 omega subunit. When a sigma factor is associated with the core the holoenzyme is formed, which can initiate transcription.

The catalysed reaction is RNA(n) + a ribonucleoside 5'-triphosphate = RNA(n+1) + diphosphate. Promotes RNA polymerase assembly. Latches the N- and C-terminal regions of the beta' subunit thereby facilitating its interaction with the beta and alpha subunits. This chain is DNA-directed RNA polymerase subunit omega, found in Moorella thermoacetica (strain ATCC 39073 / JCM 9320).